Here is a 30-residue protein sequence, read N- to C-terminus: LIM and SH3 domain protein 1 (30 aa).

N-acetylmethionine is present on methionine 1. The LIM zinc-binding domain occupies 5 to 30 (CARCGKIVYPTEKVNCLDKFWHKACF).

In terms of assembly, interacts with F-actin. Interacts with ANKRD54. Interacts with KBTBD10. Phosphorylated.

Its subcellular location is the cytoplasm. It localises to the cell cortex. The protein resides in the cytoskeleton. Plays an important role in the regulation of dynamic actin-based, cytoskeletal activities. Agonist-dependent changes in LASP1 phosphorylation may also serve to regulate actin-associated ion transport activities, not only in the parietal cell but also in certain other F-actin-rich secretory epithelial cell types. This Sus scrofa (Pig) protein is LIM and SH3 domain protein 1 (LASP1).